We begin with the raw amino-acid sequence, 377 residues long: Actin-related protein T2 (377 aa).

The protein belongs to the actin family.

It localises to the cytoplasm. Its subcellular location is the cytoskeleton. The chain is Actin-related protein T2 (ACTRT2) from Bos taurus (Bovine).